The primary structure comprises 144 residues: UPF0102 protein BURPS668_3819 (144 aa).

Positions 1–28 (MCHAREASLGTGEPEAAPRDNFPREAGS) are disordered. Residues 16–28 (AAPRDNFPREAGS) are compositionally biased toward basic and acidic residues.

The protein belongs to the UPF0102 family.

The protein is UPF0102 protein BURPS668_3819 of Burkholderia pseudomallei (strain 668).